We begin with the raw amino-acid sequence, 244 residues long: Histone H1, orphon (244 aa).

Over residues 1 to 21 the composition is skewed to low complexity; that stretch reads MSDPAPEIEAPVEAAPVASPP. Disordered regions lie at residues 1–59 and 113–244; these read MSDP…PVSE and QAKG…KKAK. Over residues 35 to 45 the composition is skewed to basic and acidic residues; sequence PKAEKPKSDKP. The H15 domain occupies 53–127; that stretch reads THPPVSEMVV…GASGSFKLPP (75 aa). Residues 186–203 are compositionally biased toward low complexity; it reads AKPASKKAAAPKPKAAKP. Positions 213-244 are enriched in basic residues; the sequence is ATKAAAKKPVAKPVAKKPAAKPAKKPAAKKAK.

The protein belongs to the histone H1/H5 family.

The protein resides in the nucleus. Its subcellular location is the chromosome. Histones H1 are necessary for the condensation of nucleosome chains into higher-order structures. The sequence is that of Histone H1, orphon from Chironomus thummi thummi (Midge).